A 292-amino-acid polypeptide reads, in one-letter code: Phosphatidylserine decarboxylase proenzyme (292 aa).

Active-site charge relay system; for autoendoproteolytic cleavage activity residues include aspartate 92, histidine 149, and serine 255. Catalysis depends on serine 255, which acts as the Schiff-base intermediate with substrate; via pyruvic acid; for decarboxylase activity. Serine 255 is modified (pyruvic acid (Ser); by autocatalysis).

It belongs to the phosphatidylserine decarboxylase family. PSD-B subfamily. Prokaryotic type I sub-subfamily. Heterodimer of a large membrane-associated beta subunit and a small pyruvoyl-containing alpha subunit. Pyruvate serves as cofactor. In terms of processing, is synthesized initially as an inactive proenzyme. Formation of the active enzyme involves a self-maturation process in which the active site pyruvoyl group is generated from an internal serine residue via an autocatalytic post-translational modification. Two non-identical subunits are generated from the proenzyme in this reaction, and the pyruvate is formed at the N-terminus of the alpha chain, which is derived from the carboxyl end of the proenzyme. The autoendoproteolytic cleavage occurs by a canonical serine protease mechanism, in which the side chain hydroxyl group of the serine supplies its oxygen atom to form the C-terminus of the beta chain, while the remainder of the serine residue undergoes an oxidative deamination to produce ammonia and the pyruvoyl prosthetic group on the alpha chain. During this reaction, the Ser that is part of the protease active site of the proenzyme becomes the pyruvoyl prosthetic group, which constitutes an essential element of the active site of the mature decarboxylase.

The protein localises to the cell membrane. It carries out the reaction a 1,2-diacyl-sn-glycero-3-phospho-L-serine + H(+) = a 1,2-diacyl-sn-glycero-3-phosphoethanolamine + CO2. It participates in phospholipid metabolism; phosphatidylethanolamine biosynthesis; phosphatidylethanolamine from CDP-diacylglycerol: step 2/2. In terms of biological role, catalyzes the formation of phosphatidylethanolamine (PtdEtn) from phosphatidylserine (PtdSer). In Idiomarina loihiensis (strain ATCC BAA-735 / DSM 15497 / L2-TR), this protein is Phosphatidylserine decarboxylase proenzyme.